Consider the following 286-residue polypeptide: 4-diphosphocytidyl-2-C-methyl-D-erythritol kinase (286 aa).

The active site involves lysine 10. 100–110 (PMGSGLGGGSS) is an ATP binding site. Residue aspartate 142 is part of the active site.

This sequence belongs to the GHMP kinase family. IspE subfamily. In terms of assembly, homodimer.

The catalysed reaction is 4-CDP-2-C-methyl-D-erythritol + ATP = 4-CDP-2-C-methyl-D-erythritol 2-phosphate + ADP + H(+). It functions in the pathway isoprenoid biosynthesis; isopentenyl diphosphate biosynthesis via DXP pathway; isopentenyl diphosphate from 1-deoxy-D-xylulose 5-phosphate: step 3/6. Catalyzes the phosphorylation of the position 2 hydroxy group of 4-diphosphocytidyl-2C-methyl-D-erythritol. The chain is 4-diphosphocytidyl-2-C-methyl-D-erythritol kinase from Buchnera aphidicola subsp. Acyrthosiphon pisum (strain APS) (Acyrthosiphon pisum symbiotic bacterium).